The chain runs to 648 residues: 1-deoxy-D-xylulose-5-phosphate synthase (648 aa).

Residues His-73 and 114 to 116 each bind thiamine diphosphate; that span reads SHA. A Mg(2+)-binding site is contributed by Asp-145. Residues 146–147, Asn-175, Tyr-286, and Glu-367 each bind thiamine diphosphate; that span reads GA. A Mg(2+)-binding site is contributed by Asn-175.

It belongs to the transketolase family. DXPS subfamily. Homodimer. Requires Mg(2+) as cofactor. Thiamine diphosphate serves as cofactor.

It carries out the reaction D-glyceraldehyde 3-phosphate + pyruvate + H(+) = 1-deoxy-D-xylulose 5-phosphate + CO2. The protein operates within metabolic intermediate biosynthesis; 1-deoxy-D-xylulose 5-phosphate biosynthesis; 1-deoxy-D-xylulose 5-phosphate from D-glyceraldehyde 3-phosphate and pyruvate: step 1/1. Functionally, catalyzes the acyloin condensation reaction between C atoms 2 and 3 of pyruvate and glyceraldehyde 3-phosphate to yield 1-deoxy-D-xylulose-5-phosphate (DXP). The chain is 1-deoxy-D-xylulose-5-phosphate synthase from Rhodococcus erythropolis (strain PR4 / NBRC 100887).